The following is a 214-amino-acid chain: Glutathione S-transferase 1 (214 aa).

In terms of domain architecture, GST N-terminal spans 2–83 (APMKLYGAVM…YAARKNKPEL (82 aa)). Glutathione-binding positions include S12, 41–42 (HK), 54–55 (QV), and 67–68 (ES). Positions 88–214 (NLEEAAMVDV…KVAALMKPSA (127 aa)) constitute a GST C-terminal domain.

Belongs to the GST superfamily. Phi family. Homodimer or heterodimer of GST-I and GST-IV (=GST-II). Expressed in the stem and leaves, lower levels are seen in the pollen and endosperm.

The enzyme catalyses RX + glutathione = an S-substituted glutathione + a halide anion + H(+). Functionally, conjugation of reduced glutathione to a wide number of exogenous and endogenous hydrophobic electrophiles. Involved in the detoxification of certain herbicides. The sequence is that of Glutathione S-transferase 1 (GST1) from Zea mays (Maize).